Here is a 604-residue protein sequence, read N- to C-terminus: Replication protein E1 (604 aa).

Positions 76–78 (KRK) match the Nuclear localization signal motif. Phosphoserine; by host is present on residues serine 81 and serine 89. The short motif at 88–97 (LSPRLESISL) is the Nuclear export signal element. The DNA-binding region stretch occupies residues 144–307 (GSGAIDIDYL…TILGHQNAEA (164 aa)). Positions 406–556 (VNFITFLAAF…FPMKPDNTPQ (151 aa)) constitute an SF3 helicase domain. Residue 432–439 (GPPNSGKS) coordinates ATP. Lysine 513 participates in a covalent cross-link: Glycyl lysine isopeptide (Lys-Gly) (interchain with G-Cter in SUMO). The tract at residues 579–604 (DQEEEGQHGESQRAFQCSARSANEHI) is disordered. Polar residues predominate over residues 591 to 604 (RAFQCSARSANEHI).

It belongs to the papillomaviridae E1 protein family. Can form hexamers. Interacts with E2 protein; this interaction increases E1 DNA binding specificity. Interacts with host DNA polymerase subunit POLA2. Interacts with host single stranded DNA-binding protein RPA1. Interacts with host TOP1; this interaction stimulates the enzymatic activity of TOP1. In terms of processing, phosphorylated. Post-translationally, sumoylated.

It localises to the host nucleus. It catalyses the reaction Couples ATP hydrolysis with the unwinding of duplex DNA by translocating in the 3'-5' direction.. The catalysed reaction is ATP + H2O = ADP + phosphate + H(+). In terms of biological role, ATP-dependent DNA 3'-5' helicase required for initiation of viral DNA replication. It forms a complex with the viral E2 protein. The E1-E2 complex binds to the replication origin which contains binding sites for both proteins. During the initial step, a dimer of E1 interacts with a dimer of protein E2 leading to a complex that binds the viral origin of replication with high specificity. Then, a second dimer of E1 displaces the E2 dimer in an ATP-dependent manner to form the E1 tetramer. Following this, two E1 monomers are added to each half of the site, which results in the formation of two E1 trimers on the viral ori. Subsequently, two hexamers will be created. The double hexamer acts as a bi-directional helicase machinery and unwinds the viral DNA and then recruits the host DNA polymerase to start replication. The sequence is that of Replication protein E1 from Human papillomavirus 12.